A 666-amino-acid polypeptide reads, in one-letter code: Adenylylsulfate reductase subunit alpha (666 aa).

FAD is bound by residues 32-35 (GGMG), 60-61 (DK), 67-69 (SGA), N78, I193, S259, S417, 461-462 (AD), and S472.

The protein belongs to the FAD-dependent oxidoreductase 2 family. Heterodimer composed of AprA and AprB. The heterodimers can dimerize to form heterotetramers. FAD serves as cofactor.

The protein localises to the cytoplasm. The enzyme catalyses sulfite + A + AMP + 2 H(+) = adenosine 5'-phosphosulfate + AH2. Catalytic subunit of the adenylylsulfate reductase which catalyzes reversibly the reduction of adenosine 5'-phosphosulfate (APS) to sulfite and AMP during dissimilatory sulfate reduction. The protein is Adenylylsulfate reductase subunit alpha of Megalodesulfovibrio gigas (strain ATCC 19364 / DSM 1382 / NCIMB 9332 / VKM B-1759) (Desulfovibrio gigas).